The primary structure comprises 179 residues: UPF0227 protein Sbal195_2522 (179 aa).

This sequence belongs to the UPF0227 family.

This is UPF0227 protein Sbal195_2522 from Shewanella baltica (strain OS195).